The sequence spans 315 residues: Replication factor C small subunit (315 aa).

43–50 contributes to the ATP binding site; sequence GSPGVGKT.

This sequence belongs to the activator 1 small subunits family. RfcS subfamily. Heteromultimer composed of small subunits (RfcS) and large subunits (RfcL).

Part of the RFC clamp loader complex which loads the PCNA sliding clamp onto DNA. This is Replication factor C small subunit from Methanococcus vannielii (strain ATCC 35089 / DSM 1224 / JCM 13029 / OCM 148 / SB).